A 118-amino-acid chain; its full sequence is Large ribosomal subunit protein bL19 (118 aa).

This sequence belongs to the bacterial ribosomal protein bL19 family.

In terms of biological role, this protein is located at the 30S-50S ribosomal subunit interface and may play a role in the structure and function of the aminoacyl-tRNA binding site. This Helicobacter pylori (strain J99 / ATCC 700824) (Campylobacter pylori J99) protein is Large ribosomal subunit protein bL19 (rplS).